The primary structure comprises 419 residues: Ribosome biogenesis protein NOP53 (419 aa).

Disordered regions lie at residues Met1–Arg21 and Lys233–Gln283. Positions Lys233–Ala261 are enriched in basic and acidic residues. 4 positions are modified to phosphoserine: Ser242, Ser249, Ser252, and Ser256. The segment covering Lys269–Gln283 has biased composition (basic residues).

It belongs to the NOP53 family.

The protein localises to the nucleus. The protein resides in the nucleolus. Its subcellular location is the nucleoplasm. May play a role in ribosome biogenesis. This Schizosaccharomyces pombe (strain 972 / ATCC 24843) (Fission yeast) protein is Ribosome biogenesis protein NOP53.